We begin with the raw amino-acid sequence, 361 residues long: Peptide chain release factor 1 (361 aa).

Glutamine 235 bears the N5-methylglutamine mark.

Belongs to the prokaryotic/mitochondrial release factor family. In terms of processing, methylated by PrmC. Methylation increases the termination efficiency of RF1.

The protein resides in the cytoplasm. Functionally, peptide chain release factor 1 directs the termination of translation in response to the peptide chain termination codons UAG and UAA. The protein is Peptide chain release factor 1 of Buchnera aphidicola subsp. Acyrthosiphon pisum (strain 5A).